A 343-amino-acid chain; its full sequence is Dimethyladenosine transferase 1, mitochondrial (343 aa).

S-adenosyl-L-methionine-binding positions include 28–31 (QNFL), asparagine 29, leucine 31, glycine 56, glutamate 78, aspartate 133, and asparagine 169.

The protein belongs to the class I-like SAM-binding methyltransferase superfamily. rRNA adenine N(6)-methyltransferase family. KsgA subfamily.

It localises to the mitochondrion. Functionally, probable S-adenosyl-L-methionine-dependent methyltransferase which specifically dimethylates mitochondrial 12S rRNA at the conserved stem loop. Also required for basal transcription of mitochondrial DNA. Stimulates transcription independently of the methyltransferase activity. This is Dimethyladenosine transferase 1, mitochondrial from Vermamoeba vermiformis (Amoeba).